Reading from the N-terminus, the 270-residue chain is Interleukin-1 alpha (270 aa).

Residues 1–112 constitute a propeptide that is removed on maturation; sequence MAKVPDLFED…DTEEEIIKPR (112 aa). Lys82 bears the N6-acetyllysine mark. The tract at residues 82-86 is nuclear localization signal (NLS); that stretch reads KKRRL. Position 87 is a phosphoserine (Ser87). 2 N-linked (GlcNAc...) asparagine glycosylation sites follow: Asn102 and Asn141.

Belongs to the IL-1 family. Monomer. Interacts with TMED10; the interaction mediates the translocation from the cytoplasm into the ERGIC (endoplasmic reticulum-Golgi intermediate compartment) and thereby secretion. Interacts with IL1R1. Interacts with S100A13; this interaction is the first step in the export of IL1A, followed by direct translocation of this complex across the plasma membrane. Post-translationally, acetylated within its nuclear localization sequence, which impacts subcellular localization. Proteolytic processed by CAPN1 in a calcium-dependent manner. Cleavage from 31 kDa precursor to 18 kDa biologically active molecules. In terms of processing, phosphorylated. Phosphorylation greatly enhances susceptibility to digestion and promotes the conversion of pre-IL1A alpha to the biologically active IL1A.

The protein localises to the nucleus. It localises to the cytoplasm. It is found in the secreted. Its function is as follows. Cytokine constitutively present intracellularly in nearly all resting non-hematopoietic cells that plays an important role in inflammation and bridges the innate and adaptive immune systems. After binding to its receptor IL1R1 together with its accessory protein IL1RAP, forms the high affinity interleukin-1 receptor complex. Signaling involves the recruitment of adapter molecules such as MYD88, IRAK1 or IRAK4. In turn, mediates the activation of NF-kappa-B and the three MAPK pathways p38, p42/p44 and JNK pathways. Within the cell, acts as an alarmin and cell death results in its liberation in the extracellular space after disruption of the cell membrane to induce inflammation and alert the host to injury or damage. In addition to its role as a danger signal, which occurs when the cytokine is passively released by cell necrosis, directly senses DNA damage and acts as signal for genotoxic stress without loss of cell integrity. In Sus scrofa (Pig), this protein is Interleukin-1 alpha (IL1A).